Reading from the N-terminus, the 295-residue chain is ATP synthase gamma chain (295 aa).

It belongs to the ATPase gamma chain family. In terms of assembly, F-type ATPases have 2 components, CF(1) - the catalytic core - and CF(0) - the membrane proton channel. CF(1) has five subunits: alpha(3), beta(3), gamma(1), delta(1), epsilon(1). CF(0) has three main subunits: a, b and c.

Its subcellular location is the cell inner membrane. Functionally, produces ATP from ADP in the presence of a proton gradient across the membrane. The gamma chain is believed to be important in regulating ATPase activity and the flow of protons through the CF(0) complex. This Paraburkholderia phymatum (strain DSM 17167 / CIP 108236 / LMG 21445 / STM815) (Burkholderia phymatum) protein is ATP synthase gamma chain.